The chain runs to 252 residues: Autophagy-related protein 27 (252 aa).

A signal peptide spans Met-1 to Ala-15. The region spanning Phe-16–Thr-161 is the MRH domain. Over Phe-16–Ser-176 the chain is Lumenal. 3 disulfide bridges follow: Cys-18–Cys-57, Cys-66–Cys-73, and Cys-130–Cys-159. A glycan (N-linked (GlcNAc...) asparagine) is linked at Asn-49. Residues Trp-177–Gly-197 traverse the membrane as a helical segment. Residues Gly-198 to Val-252 are Cytoplasmic-facing.

The protein belongs to the ATG27 family.

The protein localises to the cytoplasmic vesicle membrane. It is found in the golgi apparatus membrane. It localises to the mitochondrion membrane. Its subcellular location is the preautophagosomal structure membrane. In terms of biological role, plays a key role in autophagy. Effector of VPS34 phosphatidylinositol 3-phosphate kinase signaling. Regulates the cytoplasm to vacuole transport (Cvt) vesicle formation. Plays a role in ATG protein retrieval from the pre-autophagosomal structure (PAS) and is especially required for autophagy-dependent cycling of ATG9. Finally, plays an important role in biofilm formation and resistance to antifungal compounds such as fluconazole, itraconazole, terbinafine and caspofungin. This chain is Autophagy-related protein 27, found in Candida albicans (strain SC5314 / ATCC MYA-2876) (Yeast).